We begin with the raw amino-acid sequence, 1394 residues long: DNA-directed RNA polymerase subunit beta' (1394 aa).

Zn(2+)-binding residues include Cys70, Cys72, Cys85, and Cys88. Residues Asp470, Asp472, and Asp474 each coordinate Mg(2+). Positions 815, 889, 896, and 899 each coordinate Zn(2+).

This sequence belongs to the RNA polymerase beta' chain family. In terms of assembly, the RNAP catalytic core consists of 2 alpha, 1 beta, 1 beta' and 1 omega subunit. When a sigma factor is associated with the core the holoenzyme is formed, which can initiate transcription. Requires Mg(2+) as cofactor. It depends on Zn(2+) as a cofactor.

It catalyses the reaction RNA(n) + a ribonucleoside 5'-triphosphate = RNA(n+1) + diphosphate. DNA-dependent RNA polymerase catalyzes the transcription of DNA into RNA using the four ribonucleoside triphosphates as substrates. The polypeptide is DNA-directed RNA polymerase subunit beta' (Anaeromyxobacter sp. (strain K)).